Here is a 139-residue protein sequence, read N- to C-terminus: MADNQSVLSVSIVTPDGQVYNEQGDLLIVTTKSGQLGIMPNHVPVIASLEVEEARIKRGENEDEIAVNGGFLEFSGNVATIVADSAERQDDIDVNRAENARERAEATIKKAQEAHDADTLARAEVALRRAVNRINVAKH.

This sequence belongs to the ATPase epsilon chain family. In terms of assembly, F-type ATPases have 2 components, CF(1) - the catalytic core - and CF(0) - the membrane proton channel. CF(1) has five subunits: alpha(3), beta(3), gamma(1), delta(1), epsilon(1). CF(0) has three main subunits: a, b and c.

The protein localises to the cell membrane. Produces ATP from ADP in the presence of a proton gradient across the membrane. In Levilactobacillus brevis (strain ATCC 367 / BCRC 12310 / CIP 105137 / JCM 1170 / LMG 11437 / NCIMB 947 / NCTC 947) (Lactobacillus brevis), this protein is ATP synthase epsilon chain.